The chain runs to 463 residues: MVEKRKIFTVLCACGIGFTSYTSCISAAAIDNDTLINNGHKINSSIITNSSQVSAVAKEMKPFPQQVNYSGILKPNHVSQESLNNAVKNYYNDWKKKYLKNDLSSLPGGYYVKGEITGNPDGFRPLGTSEGQGYGMIITVLMAGHDSNAQTIYDGLFKTARAFKSSINPNLMGWVVADDKKAQGHFDSATDGDLDIAYSLLLAHKQWGSSGKINYLKEAQNMITKGIKASNVTKNNGLNLGDWGDKSTFDTRPSDWMMSHLRAFYEFTGDKTWLNVIDNLYNTYTNFTNKYSPKTGLISDFVVKNPPQPAPKDFLDESKYTDSYYYNASRVPLRIVMDYAMYGEKRGKVISDKVATWIKSKTKGNPSKIVDGYKLDGTNIGDYPTAVYVSPFIAAGTTNSKNQEWVNSGWDWMKNKKESYFSDSYNLLTMLFLTGNWWKPIPDEKKIQSPINLEVQSELKEQD.

Positions 1 to 27 are cleaved as a signal peptide; it reads MVEKRKIFTVLCACGIGFTSYTSCISA. A propeptide spanning residues 28–55 is cleaved from the precursor; it reads AAIDNDTLINNGHKINSSIITNSSQVSA. The Proton donor role is filled by glutamate 130. The Nucleophile role is filled by aspartate 191.

This sequence belongs to the glycosyl hydrolase 8 (cellulase D) family. The N- and the C-terminus may be subjected to proteolysis.

It carries out the reaction Endohydrolysis of (1-&gt;4)-beta-D-glucosidic linkages in cellulose, lichenin and cereal beta-D-glucans.. The polypeptide is Endoglucanase (Bacillus sp. (strain KSM-330)).